Consider the following 562-residue polypeptide: Long-chain-fatty-acid--CoA ligase (562 aa).

ATP is bound at residue 213 to 224 (YTGGTTGVAKGA).

This sequence belongs to the ATP-dependent AMP-binding enzyme family. The cofactor is Mg(2+).

It is found in the membrane. The catalysed reaction is a long-chain fatty acid + ATP + CoA = a long-chain fatty acyl-CoA + AMP + diphosphate. Its pathway is lipid metabolism; fatty acid beta-oxidation. Its function is as follows. Catalyzes the esterification, concomitant with transport, of exogenous long-chain fatty acids into metabolically active CoA thioesters for subsequent degradation or incorporation into phospholipids. The protein is Long-chain-fatty-acid--CoA ligase (fadD) of Yersinia pestis.